A 140-amino-acid chain; its full sequence is Putative ABC transporter permease protein ORF1 (140 aa).

The ABC transmembrane type-1 domain maps to 1–133 (DPNVAFYSVV…ITTAGIFAYF (133 aa)). A run of 3 helical transmembrane segments spans residues 9–29 (VVAVICWQYIPFYMIFFIAAL), 65–85 (TACILSLIGSLKYFDLIYVMT), and 115–135 (TIASAMFLIITTAGIFAYFVT).

This sequence belongs to the binding-protein-dependent transport system permease family. MalFG subfamily.

The protein resides in the cell membrane. May play a role in sugar transport. The polypeptide is Putative ABC transporter permease protein ORF1 (Caldicellulosiruptor sp. (strain Rt8B.4)).